The primary structure comprises 238 residues: tRNA (guanine-N(7)-)-methyltransferase (238 aa).

S-adenosyl-L-methionine is bound by residues glutamate 68, glutamate 93, aspartate 120, and aspartate 143. Residue aspartate 143 is part of the active site. Substrate contacts are provided by residues lysine 147, aspartate 179, and 216 to 219 (TKFE).

Belongs to the class I-like SAM-binding methyltransferase superfamily. TrmB family.

The catalysed reaction is guanosine(46) in tRNA + S-adenosyl-L-methionine = N(7)-methylguanosine(46) in tRNA + S-adenosyl-L-homocysteine. It functions in the pathway tRNA modification; N(7)-methylguanine-tRNA biosynthesis. Functionally, catalyzes the formation of N(7)-methylguanine at position 46 (m7G46) in tRNA. The protein is tRNA (guanine-N(7)-)-methyltransferase of Shewanella sp. (strain W3-18-1).